A 141-amino-acid chain; its full sequence is Small ribosomal subunit protein bS6 (141 aa).

The tract at residues 96 to 141 (VTGQSEMLKAEENRSERRERRERPEHADSAEGDDSNDSDSSDNADE) is disordered. The segment covering 103-124 (LKAEENRSERRERRERPEHADS) has biased composition (basic and acidic residues). The span at 125 to 141 (AEGDDSNDSDSSDNADE) shows a compositional bias: acidic residues.

This sequence belongs to the bacterial ribosomal protein bS6 family.

In terms of biological role, binds together with bS18 to 16S ribosomal RNA. The sequence is that of Small ribosomal subunit protein bS6 from Pseudomonas putida (strain ATCC 700007 / DSM 6899 / JCM 31910 / BCRC 17059 / LMG 24140 / F1).